A 263-amino-acid chain; its full sequence is 3'-5' ssDNA/RNA exonuclease TatD (263 aa).

A divalent metal cation is bound by residues glutamate 92, histidine 128, and histidine 153.

It belongs to the metallo-dependent hydrolases superfamily. TatD-type hydrolase family. TatD subfamily. Monomer. Mg(2+) serves as cofactor.

The protein localises to the cytoplasm. 3'-5' exonuclease that prefers single-stranded DNA and RNA. May play a role in the H(2)O(2)-induced DNA damage repair. The protein is 3'-5' ssDNA/RNA exonuclease TatD of Rahnella sp. (strain Y9602).